The primary structure comprises 219 residues: Sporamin A (219 aa).

The signal sequence occupies residues 1 to 23; it reads MKALTLALFLALSLYLLPNPAHS.

The protein belongs to the protease inhibitor I3 (leguminous Kunitz-type inhibitor) family. Accumulates specifically in tuberous roots and tubers upon tuberization. Sporamin accounts 60 to 80% of the total soluble protein of the organ.

Its subcellular location is the vacuole. Its function is as follows. Major tuberous root protein. The sequence is that of Sporamin A (GSPO-A1) from Ipomoea batatas (Sweet potato).